The chain runs to 323 residues: Ig gamma chain C region (323 aa).

Ig-like domains lie at 6-96, 114-213, and 222-318; these read PSVF…KTVA, PSVF…KTIS, and PKVY…KSIS.

The chain is Ig gamma chain C region from Oryctolagus cuniculus (Rabbit).